A 128-amino-acid chain; its full sequence is Small ribosomal subunit protein uS9 (128 aa).

Residues 105–128 (DPRSVERKKPGQPKARRRFQFSKR) are disordered. Basic residues predominate over residues 114-128 (PGQPKARRRFQFSKR).

Belongs to the universal ribosomal protein uS9 family.

This is Small ribosomal subunit protein uS9 from Bacteroides thetaiotaomicron (strain ATCC 29148 / DSM 2079 / JCM 5827 / CCUG 10774 / NCTC 10582 / VPI-5482 / E50).